The primary structure comprises 271 residues: Neurexophilin-1 (271 aa).

An N-terminal signal peptide occupies residues 1–21 (MQAACWYVLLLLQPTVYLVTC). The II stretch occupies residues 22–97 (ANLTNGGKSE…WDWLRNSTDL (76 aa)). N-linked (GlcNAc...) asparagine glycosylation is found at N23, N68, N93, N146, N156, and N162. An III region spans residues 98-176 (QEPRPRAKRR…LVPPTKIVEF (79 aa)). The interval 177-185 (DLAQQTVID) is IV (linker domain). Residues 186 to 271 (AKDSKSFNCR…HSDTPYFPSG (86 aa)) form a v (Cys-rich) region.

The protein belongs to the neurexophilin family. May be proteolytically processed at the boundary between the N-terminal non-conserved and the central conserved domain in neuron-like cells. As to expression, brain, only in a scattered subpopulation of neurons that probably represent inhibitory interneurons.

The protein resides in the secreted. Its function is as follows. May be signaling molecules that resemble neuropeptides. Ligand for alpha-neurexins. This chain is Neurexophilin-1 (Nxph1), found in Mus musculus (Mouse).